The sequence spans 296 residues: MTPETNNDETLSRPKPRAALPPVPEGMSKSQWKKQWKKEQFELNKPLYAKIRKEKKQKAREQRRERLQKALEENGGEIPEELRRTPRVNVNQKDSGIKVIIDCAFDELMNEKEIVSLSTQITRAYSANKRENHFADVKVTSFNKRLKERFDCGLKGANYDAWKHFEFTDESALPTTNAVYLTADTDETLETLEPGTTYIVGGIVDKNRHKALCYNKAKELGIPTRRLPIGEYIKLCGRKVLTTTHVIQIMLRYFDNHDWKEAFESVLPARKLAELADHAQESNSSSPAEEQDAQDI.

The segment at 1–33 (MTPETNNDETLSRPKPRAALPPVPEGMSKSQWK) is disordered. Positions 85–274 (TPRVNVNQKD…SVLPARKLAE (190 aa)) constitute an SAM-dependent MTase TRM10-type domain. S-adenosyl-L-methionine is bound by residues 181–182 (LT), Gly201, 205–209 (DKNRH), Cys213, Leu227, and 239–241 (KVL). Asp205 functions as the Proton acceptor in the catalytic mechanism. Residues 277–296 (DHAQESNSSSPAEEQDAQDI) form a disordered region.

Belongs to the class IV-like SAM-binding methyltransferase superfamily. TRM10 family. As to quaternary structure, monomer.

It localises to the cytoplasm. The protein localises to the nucleus. The catalysed reaction is guanosine(9) in tRNA + S-adenosyl-L-methionine = N(1)-methylguanosine(9) in tRNA + S-adenosyl-L-homocysteine + H(+). Functionally, S-adenosyl-L-methionine-dependent guanine N(1)-methyltransferase that catalyzes the formation of N(1)-methylguanine at position 9 (m1G9) in cytoplasmic tRNA. The polypeptide is tRNA (guanine(9)-N1)-methyltransferase (Eremothecium gossypii (strain ATCC 10895 / CBS 109.51 / FGSC 9923 / NRRL Y-1056) (Yeast)).